A 712-amino-acid polypeptide reads, in one-letter code: Glycine--tRNA ligase beta subunit (712 aa).

Belongs to the class-II aminoacyl-tRNA synthetase family. As to quaternary structure, tetramer of two alpha and two beta subunits.

The protein localises to the cytoplasm. It carries out the reaction tRNA(Gly) + glycine + ATP = glycyl-tRNA(Gly) + AMP + diphosphate. The chain is Glycine--tRNA ligase beta subunit from Dechloromonas aromatica (strain RCB).